We begin with the raw amino-acid sequence, 582 residues long: Aspartate--tRNA ligase (582 aa).

E174 provides a ligand contact to L-aspartate. The aspartate stretch occupies residues 198–201 (QITK). L-aspartate is bound at residue R220. Residues 220-222 (RDE) and Q229 each bind ATP. H443 contacts L-aspartate. ATP is bound at residue E477. R484 is an L-aspartate binding site. 529-532 (GLDR) contributes to the ATP binding site.

This sequence belongs to the class-II aminoacyl-tRNA synthetase family. Type 1 subfamily. In terms of assembly, homodimer.

It is found in the cytoplasm. The catalysed reaction is tRNA(Asp) + L-aspartate + ATP = L-aspartyl-tRNA(Asp) + AMP + diphosphate. In terms of biological role, catalyzes the attachment of L-aspartate to tRNA(Asp) in a two-step reaction: L-aspartate is first activated by ATP to form Asp-AMP and then transferred to the acceptor end of tRNA(Asp). In Streptococcus pyogenes serotype M6 (strain ATCC BAA-946 / MGAS10394), this protein is Aspartate--tRNA ligase.